We begin with the raw amino-acid sequence, 1075 residues long: DNA-directed RNA polymerase subunit beta (1075 aa).

Belongs to the RNA polymerase beta chain family. In plastids the minimal PEP RNA polymerase catalytic core is composed of four subunits: alpha, beta, beta', and beta''. When a (nuclear-encoded) sigma factor is associated with the core the holoenzyme is formed, which can initiate transcription.

It is found in the plastid. The protein resides in the chloroplast. It catalyses the reaction RNA(n) + a ribonucleoside 5'-triphosphate = RNA(n+1) + diphosphate. Its function is as follows. DNA-dependent RNA polymerase catalyzes the transcription of DNA into RNA using the four ribonucleoside triphosphates as substrates. This chain is DNA-directed RNA polymerase subunit beta, found in Sorghum bicolor (Sorghum).